The primary structure comprises 331 residues: uncharacterized protein (331 aa).

4 WD repeats span residues 53–92 (KAHTNITGIISCDQLNGVITCGSEGEIHLWDIRSQAKSAV), 97–139 (QQST…KLIR), 144–184 (AHND…DSTD), and 300–331 (ASEEICRAISFDVKNDVYYSGGEDGLLQAFRV).

Its subcellular location is the cytoplasm. The protein localises to the nucleus. This is an uncharacterized protein from Schizosaccharomyces pombe (strain 972 / ATCC 24843) (Fission yeast).